Here is a 466-residue protein sequence, read N- to C-terminus: MEAANEVVNLFASQATTPSSLDAVTTLETVSTPTFIFPEVSDSQILQLMPATLYSGMNWLRDHLDGFSLLALSGCIFVSVLYLVHIIAFFYSIYRLHHKVEPDPTLPGVSVIKPIVGTDKNLYQNLESFFTSQYHSFELLFCFHSEEDEAIEVVRSLIKKHPNIEAKILFEGEPVGMNPKVNNMMPAYRAARYPLVLISDSAIFMRPDGILDMATTMMSHEKMASVTQIPYCKDRQGFHAAFEQIFFGTSHARLYLVGNFLGVVCSSGMSSMMKKSALDECGGMEKFGEYLAEDYFFAKALTSRGCKAAISTHPALQNSASVTVLSFFNRIGRWIKLRIAMMPHLMVVEPLQDCVTSGLIMAFGLNYLGGYSVYKTFGLHLFYWIVMDFSLMTSMQNGKFNFTPFLFVFIWLFREFTSPFIFIKAVLAPTIVWRNNKFKLSWGGRIRTSKNSQKVPEAVSLSKGAV.

The chain crosses the membrane as a helical span at residues 70–90 (LALSGCIFVSVLYLVHIIAFF). Position 148 (D148) is a short sequence motif, D1. Residue D200 is a short sequence motif, D2. Residue D294 is a short sequence motif, D3. Catalysis depends on D294, which acts as the Proton acceptor. The (Q/R)XXRW signature appears at 330 to 334 (RIGRW). 2 helical membrane-spanning segments follow: residues 354–374 (CVTS…YSVY) and 403–423 (TPFL…FIFI).

The protein belongs to the glycosyltransferase 2 family. In terms of tissue distribution, expressed in excretory canals, pharyngeal intestinal valve, intestine and intestinal rectal valve.

Its subcellular location is the membrane. The enzyme catalyses an N-acylsphing-4-enine + UDP-alpha-D-glucose = a beta-D-glucosyl-(1&lt;-&gt;1')-N-acylsphing-4-enine + UDP + H(+). It catalyses the reaction an N-acyl-15-methylhexadecasphing-4-enine + UDP-alpha-D-glucose = an N-acyl-1-beta-D-glucosyl-15-methylhexadecasphing-4-enine + UDP + H(+). It functions in the pathway lipid metabolism; sphingolipid metabolism. In terms of biological role, catalyzes the first glycosylation step in glycosphingolipid biosynthesis, the transfer of glucose to ceramide to produce glucosylceramides (GlcCer). GlcCer are known to contribute to the physical properties and physiological functions of membranes and may regulate signal transduction. Only branched-chain sphingoid bases like 15-methylhexadecasphing-4-enine are used for generating complex sphingolipids in Caenorhabditis elegans. Together with cgt-3, plays a role in the trafficking of proteins such as mig-14 to the cell membrane in intestinal cells. The polypeptide is Ceramide glucosyltransferase 1 (Caenorhabditis elegans).